Reading from the N-terminus, the 257-residue chain is Transmembrane protein C257L (257 aa).

2 helical membrane passes run 123–143 (LELL…FTAL) and 163–183 (MMIF…YVLV).

It belongs to the asfivirus C257R family.

It is found in the host membrane. It localises to the virion. The chain is Transmembrane protein C257L from African swine fever virus (isolate Tick/South Africa/Pretoriuskop Pr4/1996) (ASFV).